Consider the following 429-residue polypeptide: Ribosomal RNA small subunit methyltransferase B (429 aa).

Residues 254-260 (CAAPGGK), D277, D303, and D322 each bind S-adenosyl-L-methionine. C375 functions as the Nucleophile in the catalytic mechanism.

This sequence belongs to the class I-like SAM-binding methyltransferase superfamily. RsmB/NOP family.

The protein resides in the cytoplasm. The enzyme catalyses cytidine(967) in 16S rRNA + S-adenosyl-L-methionine = 5-methylcytidine(967) in 16S rRNA + S-adenosyl-L-homocysteine + H(+). Specifically methylates the cytosine at position 967 (m5C967) of 16S rRNA. This chain is Ribosomal RNA small subunit methyltransferase B, found in Erwinia tasmaniensis (strain DSM 17950 / CFBP 7177 / CIP 109463 / NCPPB 4357 / Et1/99).